The following is a 309-amino-acid chain: Hydroxyacylglutathione hydrolase, mitochondrial (309 aa).

A mitochondrion-targeting transit peptide spans 1–24; the sequence is MVLGRGSLCLRSLSALGATCARRG. K90 is modified (N6-acetyllysine). Residues H103, H105, D107, and H108 each contribute to the Zn(2+) site. The residue at position 117 (K117) is an N6-acetyllysine. Residues H159 and D183 each coordinate Zn(2+). Substrate contacts are provided by residues 192-194 and 222-224; these read KFY and HEY. Residue H222 coordinates Zn(2+). At K230 the chain carries N6-acetyllysine; alternate. At K230 the chain carries N6-succinyllysine; alternate. 298–301 contributes to the substrate binding site; it reads RREK.

It belongs to the metallo-beta-lactamase superfamily. Glyoxalase II family. Monomer. The cofactor is Zn(2+).

Its subcellular location is the mitochondrion matrix. The protein localises to the cytoplasm. It carries out the reaction an S-(2-hydroxyacyl)glutathione + H2O = a 2-hydroxy carboxylate + glutathione + H(+). The enzyme catalyses (R)-S-lactoylglutathione + H2O = (R)-lactate + glutathione + H(+). Its pathway is secondary metabolite metabolism; methylglyoxal degradation; (R)-lactate from methylglyoxal: step 2/2. Functionally, thiolesterase that catalyzes the hydrolysis of S-D-lactoyl-glutathione to form glutathione and D-lactic acid. This is Hydroxyacylglutathione hydrolase, mitochondrial (Hagh) from Mus musculus (Mouse).